The sequence spans 402 residues: Putative FBD-associated F-box protein At5g56690 (402 aa).

One can recognise an F-box domain in the interval 1–47; that stretch reads MAEISGLPDDLLVKILAFLPTKVAISTSVLSKQWRFLWMWLPKLKYD. The FBD domain occupies 349–401; sequence SWSKNQGSVPKCFLNSLETFRVKWYYSEEQEDRDFLSLIFKHARCLKSTSILH.

The protein is Putative FBD-associated F-box protein At5g56690 of Arabidopsis thaliana (Mouse-ear cress).